A 248-amino-acid chain; its full sequence is Adenosylcobinamide-GDP ribazoletransferase (248 aa).

6 helical membrane passes run 36–56 (FFLPVVASIIGGMEFLIYLGL), 59–79 (FLPSNVIIVLLLLFTAMITGG), 114–134 (GTIALIIDLLLKYQLLYSLVL), 137–157 (YSIAIFLAPIIGRISILFLCL), 170–190 (IFIGNMSKPIVFFISTIVLVL), and 199–219 (ATIIPFIGALLITYLLYLLCL).

This sequence belongs to the CobS family. Requires Mg(2+) as cofactor.

The protein localises to the cell membrane. It catalyses the reaction alpha-ribazole + adenosylcob(III)inamide-GDP = adenosylcob(III)alamin + GMP + H(+). The enzyme catalyses alpha-ribazole 5'-phosphate + adenosylcob(III)inamide-GDP = adenosylcob(III)alamin 5'-phosphate + GMP + H(+). The protein operates within cofactor biosynthesis; adenosylcobalamin biosynthesis; adenosylcobalamin from cob(II)yrinate a,c-diamide: step 7/7. Functionally, joins adenosylcobinamide-GDP and alpha-ribazole to generate adenosylcobalamin (Ado-cobalamin). Also synthesizes adenosylcobalamin 5'-phosphate from adenosylcobinamide-GDP and alpha-ribazole 5'-phosphate. The protein is Adenosylcobinamide-GDP ribazoletransferase of Clostridium botulinum (strain Loch Maree / Type A3).